We begin with the raw amino-acid sequence, 503 residues long: ATP synthase subunit alpha, chloroplastic (503 aa).

Gly-170 to Thr-177 provides a ligand contact to ATP.

The protein belongs to the ATPase alpha/beta chains family. F-type ATPases have 2 components, CF(1) - the catalytic core - and CF(0) - the membrane proton channel. CF(1) has five subunits: alpha(3), beta(3), gamma(1), delta(1), epsilon(1). CF(0) has four main subunits: a, b, b' and c.

The protein localises to the plastid. Its subcellular location is the chloroplast thylakoid membrane. It carries out the reaction ATP + H2O + 4 H(+)(in) = ADP + phosphate + 5 H(+)(out). Produces ATP from ADP in the presence of a proton gradient across the membrane. The alpha chain is a regulatory subunit. The polypeptide is ATP synthase subunit alpha, chloroplastic (Gracilaria tenuistipitata var. liui (Red alga)).